Here is a 114-residue protein sequence, read N- to C-terminus: MVMQTMLRVLTVSLAFALTSYALPAAADEFEVTIHHVELQDPGLKAKVGDAISFVNHADISHNLYLTYEDGQVETLDTQPPRTTKRTVLKRAGHVVVRCWIHPIIRMEFDVAAK.

It participates in one-carbon metabolism; methylamine degradation. Functionally, probably involved in TTQ prosthetic group biosynthesis. The chain is Methylamine utilization protein MauL (mauL) from Methylorubrum extorquens (strain ATCC 14718 / DSM 1338 / JCM 2805 / NCIMB 9133 / AM1) (Methylobacterium extorquens).